The sequence spans 361 residues: Chorismate synthase (361 aa).

Positions 48 and 54 each coordinate NADP(+). FMN-binding positions include 125–127, 240–241, Gly286, 301–305, and Arg327; these read RSS, NA, and KPTSS.

This sequence belongs to the chorismate synthase family. As to quaternary structure, homotetramer. It depends on FMNH2 as a cofactor.

The catalysed reaction is 5-O-(1-carboxyvinyl)-3-phosphoshikimate = chorismate + phosphate. Its pathway is metabolic intermediate biosynthesis; chorismate biosynthesis; chorismate from D-erythrose 4-phosphate and phosphoenolpyruvate: step 7/7. Functionally, catalyzes the anti-1,4-elimination of the C-3 phosphate and the C-6 proR hydrogen from 5-enolpyruvylshikimate-3-phosphate (EPSP) to yield chorismate, which is the branch point compound that serves as the starting substrate for the three terminal pathways of aromatic amino acid biosynthesis. This reaction introduces a second double bond into the aromatic ring system. This chain is Chorismate synthase, found in Magnetococcus marinus (strain ATCC BAA-1437 / JCM 17883 / MC-1).